A 142-amino-acid polypeptide reads, in one-letter code: Nucleoside diphosphate kinase (142 aa).

ATP-binding residues include Lys9, Phe57, Arg85, Thr91, Arg102, and Asn112. The tract at residues 87 to 106 is disordered; sequence AMGATDPAKSEKGTVRGDLG. The active-site Pros-phosphohistidine intermediate is the His115.

The protein belongs to the NDK family. As to quaternary structure, homotetramer. Mg(2+) serves as cofactor.

It localises to the cytoplasm. It catalyses the reaction a 2'-deoxyribonucleoside 5'-diphosphate + ATP = a 2'-deoxyribonucleoside 5'-triphosphate + ADP. It carries out the reaction a ribonucleoside 5'-diphosphate + ATP = a ribonucleoside 5'-triphosphate + ADP. Its function is as follows. Major role in the synthesis of nucleoside triphosphates other than ATP. The ATP gamma phosphate is transferred to the NDP beta phosphate via a ping-pong mechanism, using a phosphorylated active-site intermediate. The chain is Nucleoside diphosphate kinase from Dehalococcoides mccartyi (strain ATCC BAA-2266 / KCTC 15142 / 195) (Dehalococcoides ethenogenes (strain 195)).